We begin with the raw amino-acid sequence, 252 residues long: Tabinhibitin 9 (252 aa).

Positions 1 to 23 are cleaved as a signal peptide; sequence MTSNLYYVLISPYSLAYMVQYRS. The Cell attachment site motif lies at 32 to 34; the sequence is RGD. The 145-residue stretch at 63-207 folds into the SCP domain; the sequence is YIRSTMCEIM…KARAFFTCNF (145 aa).

This sequence belongs to the CRISP family. In terms of tissue distribution, expressed in salivary glands.

Its subcellular location is the secreted. Functionally, inhibits platelet aggregation induced by all agonists tested (ADP, arachidonic acid, the thromboxane A2 analog U46619, thrombin, and snake venom snaclecs (TMVA that activates platelet through GPIB, and stejnulxin that specifically acts through GPVI (GP6))). May act by competing with fibrinogen for binding to glycoprotein IIb/IIIa (ITGA2B/ITGB3). This Tabanus yao (Horsefly) protein is Tabinhibitin 9.